A 549-amino-acid polypeptide reads, in one-letter code: Glucose-6-phosphate isomerase (549 aa).

Residue Glu355 is the Proton donor of the active site. Residues His386 and Lys514 contribute to the active site.

It belongs to the GPI family.

The protein localises to the cytoplasm. The enzyme catalyses alpha-D-glucose 6-phosphate = beta-D-fructose 6-phosphate. The protein operates within carbohydrate biosynthesis; gluconeogenesis. Its pathway is carbohydrate degradation; glycolysis; D-glyceraldehyde 3-phosphate and glycerone phosphate from D-glucose: step 2/4. Functionally, catalyzes the reversible isomerization of glucose-6-phosphate to fructose-6-phosphate. This Salmonella gallinarum (strain 287/91 / NCTC 13346) protein is Glucose-6-phosphate isomerase.